The primary structure comprises 244 residues: 5-oxoprolinase subunit A (244 aa).

Belongs to the LamB/PxpA family. Forms a complex composed of PxpA, PxpB and PxpC.

It carries out the reaction 5-oxo-L-proline + ATP + 2 H2O = L-glutamate + ADP + phosphate + H(+). Catalyzes the cleavage of 5-oxoproline to form L-glutamate coupled to the hydrolysis of ATP to ADP and inorganic phosphate. In Escherichia coli O17:K52:H18 (strain UMN026 / ExPEC), this protein is 5-oxoprolinase subunit A.